An 84-amino-acid polypeptide reads, in one-letter code: NADH dehydrogenase [ubiquinone] 1 alpha subcomplex subunit 3 (84 aa).

Position 2 is an N-acetylalanine (Ala2). Residues 19 to 39 (LVVSFSVWGLAIIMPMISPYT) traverse the membrane as a helical segment. The segment at 59–84 (DDGNMPDVPSHPQDPLGPSLDWLKNL) is disordered.

Belongs to the complex I NDUFA3 subunit family. As to quaternary structure, complex I is composed of 45 different subunits.

The protein resides in the mitochondrion inner membrane. Accessory subunit of the mitochondrial membrane respiratory chain NADH dehydrogenase (Complex I), that is believed not to be involved in catalysis. Complex I functions in the transfer of electrons from NADH to the respiratory chain. The immediate electron acceptor for the enzyme is believed to be ubiquinone. The protein is NADH dehydrogenase [ubiquinone] 1 alpha subcomplex subunit 3 (Ndufa3) of Mus musculus (Mouse).